The following is a 138-amino-acid chain: Translation initiation factor 2 subunit beta (138 aa).

The protein belongs to the eIF-2-beta/eIF-5 family. In terms of assembly, heterotrimer composed of an alpha, a beta and a gamma chain.

Its function is as follows. eIF-2 functions in the early steps of protein synthesis by forming a ternary complex with GTP and initiator tRNA. In Methanococcus maripaludis (strain C6 / ATCC BAA-1332), this protein is Translation initiation factor 2 subunit beta.